The chain runs to 473 residues: Photosystem II CP43 reaction center protein (473 aa).

A propeptide spanning residues 1-14 (MKTLYSLRRFYPVE) is cleaved from the precursor. Residue Thr15 is modified to N-acetylthreonine. The residue at position 15 (Thr15) is a Phosphothreonine. A run of 5 helical transmembrane segments spans residues 69-93 (LFEV…PHLA), 134-155 (LLGP…KDRN), 178-200 (KALY…RKIT), 255-275 (KPFA…LSYS), and 291-312 (WFNN…ASQA). [CaMn4O5] cluster is bound at residue Glu367. A helical membrane pass occupies residues 447 to 471 (RARAAAAGFEKGIDRDFEPVLSMTP).

It belongs to the PsbB/PsbC family. PsbC subfamily. PSII is composed of 1 copy each of membrane proteins PsbA, PsbB, PsbC, PsbD, PsbE, PsbF, PsbH, PsbI, PsbJ, PsbK, PsbL, PsbM, PsbT, PsbX, PsbY, PsbZ, Psb30/Ycf12, at least 3 peripheral proteins of the oxygen-evolving complex and a large number of cofactors. It forms dimeric complexes. Binds multiple chlorophylls and provides some of the ligands for the Ca-4Mn-5O cluster of the oxygen-evolving complex. It may also provide a ligand for a Cl- that is required for oxygen evolution. PSII binds additional chlorophylls, carotenoids and specific lipids. serves as cofactor.

It localises to the plastid. The protein localises to the chloroplast thylakoid membrane. Its function is as follows. One of the components of the core complex of photosystem II (PSII). It binds chlorophyll and helps catalyze the primary light-induced photochemical processes of PSII. PSII is a light-driven water:plastoquinone oxidoreductase, using light energy to abstract electrons from H(2)O, generating O(2) and a proton gradient subsequently used for ATP formation. The sequence is that of Photosystem II CP43 reaction center protein from Eucalyptus globulus subsp. globulus (Tasmanian blue gum).